The sequence spans 789 residues: Alpha-glucosidase 2 (789 aa).

Disordered stretches follow at residues 1–24 (MTGL…PRVI) and 512–531 (ELNP…ASHP). Aspartate 523 functions as the Proton donor in the catalytic mechanism. Catalysis depends on glutamate 756, which acts as the Proton acceptor.

The protein belongs to the glycosyl hydrolase 63 family.

Its pathway is glycan metabolism; N-glycan degradation. The sequence is that of Alpha-glucosidase 2 (GCS2) from Arabidopsis thaliana (Mouse-ear cress).